We begin with the raw amino-acid sequence, 404 residues long: Probable protein phosphatase 1N (404 aa).

One can recognise a PPM-type phosphatase domain in the interval 59-319 (RFGASAVQGW…DNMTCMVVCF (261 aa)). Positions 96, 97, 267, and 310 each coordinate Mn(2+).

The protein belongs to the PP2C family. It depends on Mg(2+) as a cofactor. Requires Mn(2+) as cofactor.

The catalysed reaction is O-phospho-L-seryl-[protein] + H2O = L-seryl-[protein] + phosphate. It catalyses the reaction O-phospho-L-threonyl-[protein] + H2O = L-threonyl-[protein] + phosphate. The chain is Probable protein phosphatase 1N (Ppm1n) from Mus musculus (Mouse).